Here is a 457-residue protein sequence, read N- to C-terminus: Peptidyl-prolyl cis-trans isomerase FKBP5 (457 aa).

Met1 bears the N-acetylmethionine mark. Positions 1–11 (MTTDEGAKNNE) are enriched in basic and acidic residues. Positions 1-24 (MTTDEGAKNNEESPTATVAEQGED) are disordered. Ser13 is subject to Phosphoserine. The residue at position 28 (Lys28) is an N6-acetyllysine. The 89-residue stretch at 42–130 (NGEETPMIGD…KIPSNATLFF (89 aa)) folds into the PPIase FKBP-type 1 domain. Lys155 is modified (N6-acetyllysine). Positions 157 to 243 (EGYSNPNEGA…GIEPNAELIY (87 aa)) constitute a PPIase FKBP-type 2 domain. TPR repeat units lie at residues 268-301 (AAIV…LEME), 317-350 (LAAF…DSAN), and 351-384 (EKGL…NPQN). The interval 420-457 (DAKEEANKAMGKKTSEGVTNEKGTDSQAMEEEKPEGHV) is disordered. The residue at position 445 (Ser445) is a Phosphoserine.

As to quaternary structure, part of a heteromultimeric cytoplasmic complex with HSP90AA1, HSPA1A/HSPA1B and steroid receptors. Upon ligand binding dissociates from the complex and FKBP4 takes its place. Interacts with functionally mature heterooligomeric progesterone receptor complexes along with HSP90 and TEBP. Interacts with NR3C1. Interacts with Akt/AKT1 and PHLPP1; enhancing dephosphorylation and subsequent activation of Akt/AKT1. Interacts with IFI44L; this interaction modulates the kinase activity of IKBKB and IKBKE. Interacts with IKBKB and IKBKE. Acetylation impairs ability to promote interaction between Akt/AKT1 and PHLPP1. Deacetylation by SIRT7 promotes interaction between Akt/AKT1 and PHLPP1, leading to suppress Akt/AKT1 activation. Post-translationally, ubiquitinated, leading to degradation in a proteasome-dependent manner. Deubiquitinated by USP49, leading to stabilization. In terms of tissue distribution, widely expressed, enriched in testis compared to other tissues.

It localises to the cytoplasm. The protein resides in the nucleus. It catalyses the reaction [protein]-peptidylproline (omega=180) = [protein]-peptidylproline (omega=0). With respect to regulation, inhibited by both FK506 and rapamycin. Its function is as follows. Immunophilin protein with PPIase and co-chaperone activities. Component of unligated steroid receptors heterocomplexes through interaction with heat-shock protein 90 (HSP90). Plays a role in the intracellular trafficking of heterooligomeric forms of steroid hormone receptors maintaining the complex into the cytoplasm when unliganded. Acts as a regulator of Akt/AKT1 activity by promoting the interaction between Akt/AKT1 and PHLPP1, thereby enhancing dephosphorylation and subsequent activation of Akt/AKT1. Interacts with IKBKE and IKBKB which facilitates IKK complex assembly leading to increased IKBKE and IKBKB kinase activity, NF-kappa-B activation, and IFN production. The polypeptide is Peptidyl-prolyl cis-trans isomerase FKBP5 (FKBP5) (Homo sapiens (Human)).